The primary structure comprises 440 residues: Proline--tRNA ligase (440 aa).

Belongs to the class-II aminoacyl-tRNA synthetase family. ProS type 2 subfamily. In terms of assembly, homodimer.

It localises to the cytoplasm. It carries out the reaction tRNA(Pro) + L-proline + ATP = L-prolyl-tRNA(Pro) + AMP + diphosphate. Functionally, catalyzes the attachment of proline to tRNA(Pro) in a two-step reaction: proline is first activated by ATP to form Pro-AMP and then transferred to the acceptor end of tRNA(Pro). The chain is Proline--tRNA ligase from Rhizobium johnstonii (strain DSM 114642 / LMG 32736 / 3841) (Rhizobium leguminosarum bv. viciae).